Reading from the N-terminus, the 209-residue chain is Octanoyltransferase (209 aa).

A BPL/LPL catalytic domain is found at 30–209 (DHEPEIIYLV…IQTEFNKIFK (180 aa)). Residues 69–76 (RGGKFTFH), 143–145 (AIG), and 156–158 (GVA) each bind substrate. The active-site Acyl-thioester intermediate is the C174.

The protein belongs to the LipB family.

The protein resides in the cytoplasm. It catalyses the reaction octanoyl-[ACP] + L-lysyl-[protein] = N(6)-octanoyl-L-lysyl-[protein] + holo-[ACP] + H(+). The protein operates within protein modification; protein lipoylation via endogenous pathway; protein N(6)-(lipoyl)lysine from octanoyl-[acyl-carrier-protein]: step 1/2. In terms of biological role, catalyzes the transfer of endogenously produced octanoic acid from octanoyl-acyl-carrier-protein onto the lipoyl domains of lipoate-dependent enzymes. Lipoyl-ACP can also act as a substrate although octanoyl-ACP is likely to be the physiological substrate. The sequence is that of Octanoyltransferase from Rickettsia peacockii (strain Rustic).